The sequence spans 321 residues: Phospho-N-acetylmuramoyl-pentapeptide-transferase (321 aa).

The next 10 helical transmembrane spans lie at 1-21 (MIFV…PVLI), 50-70 (MGGL…IIFV), 76-96 (IILL…DDYI), 112-132 (FLAQ…FHLV), 140-160 (IPFT…IVFW), 176-196 (GLAT…SFVL), 200-220 (AIGI…PYNI), 225-245 (VFMG…ISIM), 250-270 (LSLI…MLQV), and 300-320 (VVTV…WIGV).

This sequence belongs to the glycosyltransferase 4 family. MraY subfamily. Requires Mg(2+) as cofactor.

The protein localises to the cell membrane. It carries out the reaction UDP-N-acetyl-alpha-D-muramoyl-L-alanyl-gamma-D-glutamyl-L-lysyl-D-alanyl-D-alanine + di-trans,octa-cis-undecaprenyl phosphate = Mur2Ac(oyl-L-Ala-gamma-D-Glu-L-Lys-D-Ala-D-Ala)-di-trans,octa-cis-undecaprenyl diphosphate + UMP. The protein operates within cell wall biogenesis; peptidoglycan biosynthesis. Functionally, catalyzes the initial step of the lipid cycle reactions in the biosynthesis of the cell wall peptidoglycan: transfers peptidoglycan precursor phospho-MurNAc-pentapeptide from UDP-MurNAc-pentapeptide onto the lipid carrier undecaprenyl phosphate, yielding undecaprenyl-pyrophosphoryl-MurNAc-pentapeptide, known as lipid I. The sequence is that of Phospho-N-acetylmuramoyl-pentapeptide-transferase from Staphylococcus aureus (strain MSSA476).